A 241-amino-acid chain; its full sequence is Purine nucleoside phosphorylase DeoD-type 1 (241 aa).

Position 5 (histidine 5) interacts with a purine D-ribonucleoside. Phosphate contacts are provided by residues glycine 21, arginine 25, arginine 44, and 88-91 (RVGS). A purine D-ribonucleoside-binding positions include 180–182 (EME) and 204–205 (SD). Catalysis depends on aspartate 205, which acts as the Proton donor.

It belongs to the PNP/UDP phosphorylase family. As to quaternary structure, homohexamer; trimer of homodimers.

It carries out the reaction a purine D-ribonucleoside + phosphate = a purine nucleobase + alpha-D-ribose 1-phosphate. It catalyses the reaction a purine 2'-deoxy-D-ribonucleoside + phosphate = a purine nucleobase + 2-deoxy-alpha-D-ribose 1-phosphate. Functionally, catalyzes the reversible phosphorolytic breakdown of the N-glycosidic bond in the beta-(deoxy)ribonucleoside molecules, with the formation of the corresponding free purine bases and pentose-1-phosphate. The protein is Purine nucleoside phosphorylase DeoD-type 1 of Photobacterium profundum (strain SS9).